Consider the following 140-residue polypeptide: Large ribosomal subunit protein uL11 (140 aa).

The protein belongs to the universal ribosomal protein uL11 family. In terms of assembly, part of the ribosomal stalk of the 50S ribosomal subunit. Interacts with L10 and the large rRNA to form the base of the stalk. L10 forms an elongated spine to which L12 dimers bind in a sequential fashion forming a multimeric L10(L12)X complex. In terms of processing, one or more lysine residues are methylated.

Forms part of the ribosomal stalk which helps the ribosome interact with GTP-bound translation factors. This is Large ribosomal subunit protein uL11 from Solidesulfovibrio magneticus (strain ATCC 700980 / DSM 13731 / RS-1) (Desulfovibrio magneticus).